The following is a 256-amino-acid chain: Eukaryotic translation initiation factor 3 subunit J (256 aa).

The segment at 1–67 (MAAAAAGDSD…KEEAEVKPEV (67 aa)) is sufficient for interaction with EIF3B. The interval 1–106 (MAAAAAGDSD…LEEPEEPKVL (106 aa)) is disordered. Phosphoserine occurs at positions 9, 11, and 18. Residues 38–57 (EGEDEDEDVKDNWDDDDDEK) show a composition bias toward acidic residues. The segment covering 58 to 104 (KEEAEVKPEVKISEKKKIAEKIKEKERQQKKRQEEIKKRLEEPEEPK) has biased composition (basic and acidic residues). The stretch at 68-133 (KISEKKKIAE…ESDLELAKET (66 aa)) forms a coiled coil. A Glycyl lysine isopeptide (Lys-Gly) (interchain with G-Cter in SUMO2) cross-link involves residue Lys104. A Phosphothreonine modification is found at Thr107. Position 125 is a phosphoserine (Ser125). Residues 214 to 243 (QSKAKKKKKGVVPGGGLKATMKDDLADYGG) form a disordered region. A promotes stable association with the 40S ribosome region spans residues 241–256 (YGGYDGGYAQDYEDFM). Tyr252 bears the Phosphotyrosine mark.

This sequence belongs to the eIF-3 subunit J family. Component of the eukaryotic translation initiation factor 3 (eIF-3) complex, which is composed of 13 subunits: EIF3A, EIF3B, EIF3C, EIF3D, EIF3E, EIF3F, EIF3G, EIF3H, EIF3I, EIF3J, EIF3K, EIF3L and EIF3M. The eIF-3 complex appears to include 3 stable modules: module A is composed of EIF3A, EIF3B, EIF3G and EIF3I; module B is composed of EIF3F, EIF3H, and EIF3M; and module C is composed of EIF3C, EIF3D, EIF3E, EIF3K and EIF3L. EIF3C of module C binds EIF3B of module A and EIF3H of module B, thereby linking the three modules. EIF3J is a labile subunit that binds to the eIF-3 complex via EIF3B. The eIF-3 complex interacts with RPS6KB1 under conditions of nutrient depletion. Mitogenic stimulation leads to binding and activation of a complex composed of MTOR and RPTOR, leading to phosphorylation and release of RPS6KB1 and binding of EIF4B to eIF-3. Phosphorylated. Phosphorylation is enhanced upon serum stimulation.

It localises to the cytoplasm. Component of the eukaryotic translation initiation factor 3 (eIF-3) complex, which is required for several steps in the initiation of protein synthesis. The eIF-3 complex associates with the 40S ribosome and facilitates the recruitment of eIF-1, eIF-1A, eIF-2:GTP:methionyl-tRNAi and eIF-5 to form the 43S pre-initiation complex (43S PIC). The eIF-3 complex stimulates mRNA recruitment to the 43S PIC and scanning of the mRNA for AUG recognition. The eIF-3 complex is also required for disassembly and recycling of post-termination ribosomal complexes and subsequently prevents premature joining of the 40S and 60S ribosomal subunits prior to initiation. The eIF-3 complex specifically targets and initiates translation of a subset of mRNAs involved in cell proliferation, including cell cycling, differentiation and apoptosis, and uses different modes of RNA stem-loop binding to exert either translational activation or repression. This subunit binds directly within the mRNA entry channel of the 40S ribosome to the aminoacyl (A) site. It may regulate the interaction between the 43S PIC and mRNA. This is Eukaryotic translation initiation factor 3 subunit J from Bos taurus (Bovine).